A 224-amino-acid chain; its full sequence is Protein LURP-one-related 1 (224 aa).

A disordered region spans residues 1-23; sequence MQQPYEYRYPQGTGPSAPPPPPK.

This sequence belongs to the LOR family.

Its function is as follows. Might be related to the phospholipid scramblase and tubby-like superfamily of membrane tethered transcription factors. The protein is Protein LURP-one-related 1 of Arabidopsis thaliana (Mouse-ear cress).